A 568-amino-acid polypeptide reads, in one-letter code: Proton-coupled zinc antiporter SLC30A9, mitochondrial (568 aa).

The transit peptide at 1–67 directs the protein to the mitochondrion; that stretch reads MLPGLAAAAA…IGTLSQVKLY (67 aa). 5 helical membrane-spanning segments follow: residues 239–259, 314–334, 342–362, 392–412, and 424–444; these read VVMVAICINGLNCFFKFLAWI, GVGIFMMGAGLSWYHGVMGLL, LLWAYCILAGSLVSEGATLLV, VILLEDTAAVLGVIIAATCMG, and SLGSLGVGTLLGMVSAFLIYT. An LXXLL motif motif is present at residues 462–466; the sequence is LTELL.

It belongs to the cation diffusion facilitator (CDF) transporter (TC 2.A.4) family. SLC30A subfamily. Interacts with GRIP1, ESR1 and AR. Ubiquitously expressed in fetal and adult tissues and cancer cell lines.

The protein resides in the mitochondrion membrane. It is found in the nucleus. The protein localises to the endoplasmic reticulum. The enzyme catalyses Zn(2+)(in) + 2 H(+)(out) = Zn(2+)(out) + 2 H(+)(in). In terms of biological role, mitochondrial proton-coupled zinc ion antiporter mediating the export of zinc from the mitochondria and involved in zinc homeostasis, zinc mobilization as well as mitochondrial morphology and health. In nucleus, functions as a secondary coactivator for nuclear receptors by cooperating with p160 coactivators subtypes. Plays a role in transcriptional activation of Wnt-responsive genes. In Homo sapiens (Human), this protein is Proton-coupled zinc antiporter SLC30A9, mitochondrial.